Consider the following 444-residue polypeptide: CBL-interacting serine/threonine-protein kinase 1 (444 aa).

One can recognise a Protein kinase domain in the interval 20-275; it reads YELGRTLGEG…VVGIKASEWF (256 aa). ATP is bound by residues 26 to 34 and Lys49; that span reads LGEGNFGKV. The active-site Proton acceptor is the Asp143. The interval 161-190 is activation loop; sequence DFGLSALPQHFRDDGLLHTTCGSPNYVAPE. Phosphoserine is present on Ser165. Thr179 carries the post-translational modification Phosphothreonine. Residues 313-337 enclose the NAF domain; the sequence is DSPTIINAFQLIGMSSFLDLSGFFE. Residues 343–372 form a PPI region; it reads ERRIRFTSNSSAKDLLEKIETAVTEMGFSV.

Belongs to the protein kinase superfamily. CAMK Ser/Thr protein kinase family. SNF1 subfamily. Interacts with CBL1. Interacts with CBL2. Interacts with CBL3. Interacts with CBL9. Interacts with ECT1 and ECT2. Mn(2+) serves as cofactor. In terms of processing, autophosphorylated. In terms of tissue distribution, ubiquitous.

It carries out the reaction L-seryl-[protein] + ATP = O-phospho-L-seryl-[protein] + ADP + H(+). It catalyses the reaction L-threonyl-[protein] + ATP = O-phospho-L-threonyl-[protein] + ADP + H(+). CIPK serine-threonine protein kinases interact with CBL proteins. Binding of a CBL protein to the regulatory NAF domain of CIPK protein lead to the activation of the kinase in a calcium-dependent manner. This is CBL-interacting serine/threonine-protein kinase 1 (CIPK1) from Arabidopsis thaliana (Mouse-ear cress).